Reading from the N-terminus, the 153-residue chain is MVFEGHLVGTGLKVGVVVGRFNEFITSKLLGGALDGLKRHGVEEADIDVAWVPGAFEIPLIAKKMANSGKYDAVITLGTVIRGATTHYDYVCNEVAKGVASLSLQTDIPVIFGVLTTETIEQAIERAGTKAGNKGYESAVAAIEMAHLSKQWA.

5-amino-6-(D-ribitylamino)uracil-binding positions include phenylalanine 21, 55 to 57, and 79 to 81; these read AFE and TVI. Residue 84 to 85 coordinates (2S)-2-hydroxy-3-oxobutyl phosphate; sequence AT. The active-site Proton donor is histidine 87. Phenylalanine 112 is a binding site for 5-amino-6-(D-ribitylamino)uracil. (2S)-2-hydroxy-3-oxobutyl phosphate is bound at residue arginine 126.

Belongs to the DMRL synthase family. As to quaternary structure, forms an icosahedral capsid composed of 60 subunits, arranged as a dodecamer of pentamers.

The catalysed reaction is (2S)-2-hydroxy-3-oxobutyl phosphate + 5-amino-6-(D-ribitylamino)uracil = 6,7-dimethyl-8-(1-D-ribityl)lumazine + phosphate + 2 H2O + H(+). The protein operates within cofactor biosynthesis; riboflavin biosynthesis; riboflavin from 2-hydroxy-3-oxobutyl phosphate and 5-amino-6-(D-ribitylamino)uracil: step 1/2. Functionally, catalyzes the formation of 6,7-dimethyl-8-ribityllumazine by condensation of 5-amino-6-(D-ribitylamino)uracil with 3,4-dihydroxy-2-butanone 4-phosphate. This is the penultimate step in the biosynthesis of riboflavin. This chain is 6,7-dimethyl-8-ribityllumazine synthase, found in Bacillus cereus (strain ATCC 10987 / NRS 248).